The following is a 90-amino-acid chain: MFKRSVSRLFCAPAPAPAPRKQPGGRIQPIGVNLNQSVKKQLNHLEVLERIKKQRKEQKNNRNQVDPIIAKAYEELEEEGFFDDKNREDY.

A disordered region spans residues 1 to 26 (MFKRSVSRLFCAPAPAPAPRKQPGGR). Residues 33–66 (NLNQSVKKQLNHLEVLERIKKQRKEQKNNRNQVD) are a coiled coil.

This is an uncharacterized protein from Dictyostelium discoideum (Social amoeba).